Here is a 469-residue protein sequence, read N- to C-terminus: Cysteine--tRNA ligase (469 aa).

C33 provides a ligand contact to Zn(2+). Residues 35 to 45 (PTVYNLLHIGN) carry the 'HIGH' region motif. Zn(2+) is bound by residues C214, H239, and E243. The 'KMSKS' region signature appears at 271-275 (KMSKS). K274 lines the ATP pocket.

This sequence belongs to the class-I aminoacyl-tRNA synthetase family. In terms of assembly, monomer. Zn(2+) serves as cofactor.

The protein localises to the cytoplasm. The catalysed reaction is tRNA(Cys) + L-cysteine + ATP = L-cysteinyl-tRNA(Cys) + AMP + diphosphate. The protein is Cysteine--tRNA ligase of Petrotoga mobilis (strain DSM 10674 / SJ95).